The sequence spans 401 residues: Tumor necrosis factor receptor superfamily member 11B (401 aa).

A signal peptide spans 1–21 (MNKWLCCALLVFLDIIEWTTQ). 4 TNFR-Cys repeats span residues 24-62 (FPPKYLHYDPETGRQLLCDKCAPGTYLKQHCTVRRKTLC), 65-105 (CPDY…NRVC), 107-142 (CEEGRYLELEFCLKHRSCPPGLGVLQAGTPERNTVC), and 145-185 (CPDG…DNVC). Intrachain disulfides connect cysteine 41–cysteine 54, cysteine 44–cysteine 62, cysteine 65–cysteine 80, cysteine 83–cysteine 97, cysteine 87–cysteine 105, cysteine 107–cysteine 118, cysteine 124–cysteine 142, and cysteine 145–cysteine 160. An N-linked (GlcNAc...) asparagine glycan is attached at asparagine 98. Asparagine 165 and asparagine 178 each carry an N-linked (GlcNAc...) asparagine glycan. Cysteine 166 and cysteine 185 are disulfide-bonded. 2 consecutive Death domains span residues 198–269 (DVTL…MVKK) and 270–365 (IIQD…THSL). A glycan (N-linked (GlcNAc...) asparagine) is linked at asparagine 289.

In terms of assembly, homodimer. Interacts with TNFSF10 and TNFSF11.

The protein localises to the secreted. Acts as a decoy receptor for TNFSF11/RANKL and thereby neutralizes its function in osteoclastogenesis. Inhibits the activation of osteoclasts and promotes osteoclast apoptosis in vitro. Bone homeostasis seems to depend on the local ratio between TNFSF11 and TNFRSF11B. May also play a role in preventing arterial calcification. May act as decoy receptor for TNFSF10/TRAIL and protect against apoptosis. TNFSF10/TRAIL binding blocks the inhibition of osteoclastogenesis. The protein is Tumor necrosis factor receptor superfamily member 11B (Tnfrsf11b) of Rattus norvegicus (Rat).